Consider the following 270-residue polypeptide: 4-hydroxy-tetrahydrodipicolinate reductase (270 aa).

Residues 11-16 and Glu37 contribute to the NAD(+) site; that span reads GAGGRM. Arg38 is an NADP(+) binding site. NAD(+) contacts are provided by residues 101–103 and 125–128; these read GTT and APNM. His158 acts as the Proton donor/acceptor in catalysis. A (S)-2,3,4,5-tetrahydrodipicolinate-binding site is contributed by His159. The active-site Proton donor is the Lys162. 168-169 serves as a coordination point for (S)-2,3,4,5-tetrahydrodipicolinate; the sequence is GT.

The protein belongs to the DapB family.

It is found in the cytoplasm. It carries out the reaction (S)-2,3,4,5-tetrahydrodipicolinate + NAD(+) + H2O = (2S,4S)-4-hydroxy-2,3,4,5-tetrahydrodipicolinate + NADH + H(+). The enzyme catalyses (S)-2,3,4,5-tetrahydrodipicolinate + NADP(+) + H2O = (2S,4S)-4-hydroxy-2,3,4,5-tetrahydrodipicolinate + NADPH + H(+). It functions in the pathway amino-acid biosynthesis; L-lysine biosynthesis via DAP pathway; (S)-tetrahydrodipicolinate from L-aspartate: step 4/4. Catalyzes the conversion of 4-hydroxy-tetrahydrodipicolinate (HTPA) to tetrahydrodipicolinate. In Shewanella oneidensis (strain ATCC 700550 / JCM 31522 / CIP 106686 / LMG 19005 / NCIMB 14063 / MR-1), this protein is 4-hydroxy-tetrahydrodipicolinate reductase.